Here is a 592-residue protein sequence, read N- to C-terminus: Protein kinase C zeta type (592 aa).

A PB1 domain is found at 15–98 (RVRLKAHYGG…EGLIIHVFPS (84 aa)). The interval 79–145 (AFRLARQCRD…KRFNRRAYCG (67 aa)) is interaction with SQSTM1. Residues 130–180 (GHLFQAKRFNRRAYCGQCSERIWGLARQGYRCINCKLLVHKRCHGLVPLTC) form a Phorbol-ester/DAG-type zinc finger. Positions 252–518 (FDLIRVIGRG…FSDIKSHAFF (267 aa)) constitute a Protein kinase domain. ATP is bound by residues 258–266 (IGRGSYAKV) and K281. The active-site Proton acceptor is the D376. T410 is modified (phosphothreonine; by PDPK1 and PI3K). An AGC-kinase C-terminal domain is found at 519 to 590 (RSIDWDLLEK…INPLLLSTEE (72 aa)). T560 bears the Phosphothreonine mark. S591 carries the phosphoserine modification.

The protein belongs to the protein kinase superfamily. AGC Ser/Thr protein kinase family. PKC subfamily. Forms a ternary complex with SQSTM1 and KCNAB2. Forms another ternary complex with SQSTM1 and GABRR3. Forms a complex with SQSTM1 and MAP2K5. Interacts with PARD6A, PARD6B, PARD6G and SQSTM1. Part of a complex with PARD3, PARD6A or PARD6B or PARD6G and CDC42 or RAC1. Interacts with ADAP1/CENTA1. Forms a ternary complex composed of SQSTM1 and PAWR. Interacts directly with SQSTM1. Interacts with IKBKB. Interacts (via the protein kinase domain) with WWC1. Forms a tripartite complex with WWC1 and DDR1, but predominantly in the absence of collagen. Component of the Par polarity complex, composed of at least phosphorylated PRKCZ, PARD3 and TIAM1. Interacts with PDPK1 (via N-terminal region). Interacts with WDFY2 (via WD repeats 1-3). Interacts with VAMP2. Forms a complex with WDFY2 and VAMP2. Interacts with APPL1. Interacts with WWC1, WWC2 and WWC3. Post-translationally, CDH5 is required for its phosphorylation at Thr-410. Phosphorylated by protein kinase PDPK1; phosphorylation is inhibited by the apoptotic C-terminal cleavage product of PKN2. Phosphorylation at Thr-410 by PI3K activates the kinase. In terms of tissue distribution, expressed in brain, and to a lesser extent in lung, kidney and testis.

The protein localises to the cytoplasm. Its subcellular location is the endosome. It is found in the cell junction. The protein resides in the membrane. The catalysed reaction is L-seryl-[protein] + ATP = O-phospho-L-seryl-[protein] + ADP + H(+). The enzyme catalyses L-threonyl-[protein] + ATP = O-phospho-L-threonyl-[protein] + ADP + H(+). Its activity is regulated as follows. Atypical PKCs (PRKCI and PRKCZ) exhibit an elevated basal enzymatic activity (that may be due to the interaction with SMG1 or SQSTM1) and are not regulated by diacylglycerol, phosphatidylserine, phorbol esters or calcium ions. Two specific sites, Thr-410 (activation loop of the kinase domain) and Thr-560 (turn motif), need to be phosphorylated for its full activation. Phosphatidylinositol 3,4,5-trisphosphate might be a physiological activator. Isoform 2: Constitutively active. In terms of biological role, calcium- and diacylglycerol-independent serine/threonine-protein kinase that functions in phosphatidylinositol 3-kinase (PI3K) pathway and mitogen-activated protein (MAP) kinase cascade, and is involved in NF-kappa-B activation, mitogenic signaling, cell proliferation, cell polarity, inflammatory response and maintenance of long-term potentiation (LTP). Upon lipopolysaccharide (LPS) treatment in macrophages, or following mitogenic stimuli, functions downstream of PI3K to activate MAP2K1/MEK1-MAPK1/ERK2 signaling cascade independently of RAF1 activation. Required for insulin-dependent activation of AKT3, but may function as an adapter rather than a direct activator. Upon insulin treatment may act as a downstream effector of PI3K and contribute to the activation of translocation of the glucose transporter SLC2A4/GLUT4 and subsequent glucose transport in adipocytes. In EGF-induced cells, binds and activates MAP2K5/MEK5-MAPK7/ERK5 independently of its kinase activity and can activate JUN promoter through MEF2C. Through binding with SQSTM1/p62, functions in interleukin-1 signaling and activation of NF-kappa-B with the specific adapters RIPK1 and TRAF6. Participates in TNF-dependent transactivation of NF-kappa-B by phosphorylating and activating IKBKB kinase, which in turn leads to the degradation of NF-kappa-B inhibitors. In migrating astrocytes, forms a cytoplasmic complex with PARD6A and is recruited by CDC42 to function in the establishment of cell polarity along with the microtubule motor and dynein. In association with FEZ1, stimulates neuronal differentiation in PC12 cells. In the inflammatory response, is required for the T-helper 2 (Th2) differentiation process, including interleukin production, efficient activation of JAK1 and the subsequent phosphorylation and nuclear translocation of STAT6. May be involved in development of allergic airway inflammation (asthma), a process dependent on Th2 immune response. In the NF-kappa-B-mediated inflammatory response, can relieve SETD6-dependent repression of NF-kappa-B target genes by phosphorylating the RELA subunit at 'Ser-311'. Phosphorylates VAMP2 in vitro. Phosphorylates and activates LRRK1, which phosphorylates RAB proteins involved in intracellular trafficking. Its function is as follows. Involved in late synaptic long term potention phase in CA1 hippocampal cells and long term memory maintenance. This chain is Protein kinase C zeta type (PRKCZ), found in Homo sapiens (Human).